The sequence spans 377 residues: N5-carboxyaminoimidazole ribonucleotide synthase (377 aa).

Residues arginine 93, lysine 133, 138–144, 175–178, glutamate 183, histidine 206, and 257–258 each bind ATP; these read GYDGKGQ, EEFV, and NE. Residues 97–287 form the ATP-grasp domain; it reads KALLDNAGVR…QFENHLRAVC (191 aa).

This sequence belongs to the PurK/PurT family. As to quaternary structure, homodimer.

The catalysed reaction is 5-amino-1-(5-phospho-beta-D-ribosyl)imidazole + hydrogencarbonate + ATP = 5-carboxyamino-1-(5-phospho-D-ribosyl)imidazole + ADP + phosphate + 2 H(+). The protein operates within purine metabolism; IMP biosynthesis via de novo pathway; 5-amino-1-(5-phospho-D-ribosyl)imidazole-4-carboxylate from 5-amino-1-(5-phospho-D-ribosyl)imidazole (N5-CAIR route): step 1/2. In terms of biological role, catalyzes the ATP-dependent conversion of 5-aminoimidazole ribonucleotide (AIR) and HCO(3)(-) to N5-carboxyaminoimidazole ribonucleotide (N5-CAIR). The chain is N5-carboxyaminoimidazole ribonucleotide synthase from Vibrio parahaemolyticus serotype O3:K6 (strain RIMD 2210633).